The following is a 256-amino-acid chain: Small ribosomal subunit protein eS1B (256 aa).

Position 2 is an N-acetylalanine; partial (Ala2).

It belongs to the eukaryotic ribosomal protein eS1 family. Component of the small ribosomal subunit. Mature ribosomes consist of a small (40S) and a large (60S) subunit. The 40S subunit contains about 33 different proteins and 1 molecule of RNA (18S). The 60S subunit contains about 49 different proteins and 3 molecules of RNA (25S, 5.8S and 5S).

The protein localises to the cytoplasm. The polypeptide is Small ribosomal subunit protein eS1B (Scheffersomyces stipitis (strain ATCC 58785 / CBS 6054 / NBRC 10063 / NRRL Y-11545) (Yeast)).